The primary structure comprises 354 residues: UDP-3-O-acylglucosamine N-acyltransferase (354 aa).

Catalysis depends on His247, which acts as the Proton acceptor.

The protein belongs to the transferase hexapeptide repeat family. LpxD subfamily. Homotrimer.

The catalysed reaction is a UDP-3-O-[(3R)-3-hydroxyacyl]-alpha-D-glucosamine + a (3R)-hydroxyacyl-[ACP] = a UDP-2-N,3-O-bis[(3R)-3-hydroxyacyl]-alpha-D-glucosamine + holo-[ACP] + H(+). Its pathway is bacterial outer membrane biogenesis; LPS lipid A biosynthesis. Catalyzes the N-acylation of UDP-3-O-acylglucosamine using 3-hydroxyacyl-ACP as the acyl donor. Is involved in the biosynthesis of lipid A, a phosphorylated glycolipid that anchors the lipopolysaccharide to the outer membrane of the cell. This Chlamydia trachomatis serovar L2b (strain UCH-1/proctitis) protein is UDP-3-O-acylglucosamine N-acyltransferase.